The following is a 129-amino-acid chain: Small ribosomal subunit protein uS11 (129 aa).

The protein belongs to the universal ribosomal protein uS11 family. Part of the 30S ribosomal subunit. Interacts with proteins S7 and S18. Binds to IF-3.

In terms of biological role, located on the platform of the 30S subunit, it bridges several disparate RNA helices of the 16S rRNA. Forms part of the Shine-Dalgarno cleft in the 70S ribosome. This is Small ribosomal subunit protein uS11 from Synechococcus sp. (strain RCC307).